The chain runs to 417 residues: Histidine biosynthesis bifunctional protein his7 (417 aa).

Residues 225–299 (GLVYSSKESV…HLDTLHCFGQ (75 aa)) are phosphoribosyl-AMP cyclohydrolase. The tract at residues 303–387 (LCQLEKTLID…ISRHLDLKHR (85 aa)) is phosphoribosyl-ATP pyrophosphohydrolase.

It localises to the cytoplasm. It catalyses the reaction 1-(5-phospho-beta-D-ribosyl)-5'-AMP + H2O = 1-(5-phospho-beta-D-ribosyl)-5-[(5-phospho-beta-D-ribosylamino)methylideneamino]imidazole-4-carboxamide. The enzyme catalyses 1-(5-phospho-beta-D-ribosyl)-ATP + H2O = 1-(5-phospho-beta-D-ribosyl)-5'-AMP + diphosphate + H(+). It functions in the pathway amino-acid biosynthesis; L-histidine biosynthesis; L-histidine from 5-phospho-alpha-D-ribose 1-diphosphate: step 2/9. It participates in amino-acid biosynthesis; L-histidine biosynthesis; L-histidine from 5-phospho-alpha-D-ribose 1-diphosphate: step 3/9. This is Histidine biosynthesis bifunctional protein his7 from Schizosaccharomyces pombe (strain 972 / ATCC 24843) (Fission yeast).